A 635-amino-acid chain; its full sequence is MSETATTNKETRGFQSEVKQLLHLMIHSLYSNKEIFLRELISNASDAVDKLRFQALSHPDLYQGDAELGVKLSFDKDKNTLTISDNGIGMTRDEVIENLGTIAKSGTAEFFSKLSQEQSKNSQLIGQFGVGFYSAFIVADAVTVRTRAAGSAPADAVQWYSKGEGEYTVETINKESRGTDIILHLREEGKEFLSEWRLRDVISKYSDHIGIPVYIQTSVMDEEGKATEETKWEQINKAQALWTRAKSEVTDEEYKEFYKHVSHDFADPLVWSHNKVEGKNDYTSLLYIPAKAPWDLFNREHKHGLKLYVQRVFIMDDAAQFMPSYLRFVRGLIDSNDLPLNVSREILQDNKITQSLRQACTKRVLTMLERMASNDADNYQKFWKEFGLVMKEGPAEDFANREKIASLLRFASTHIDSAEQTISLASYVERMKEGQDKIYYLTADSYTAAKNSPHLEQFKSKGIEVILMFDRIDEWLMNYLPEFEGKAFQSITKAGLDLSQFEDEAEKEKHKETEEQFKSVVERLKGYLGSRVKEVRTTFKLANTPAVVVTDDYEMGTQMAKLLAAAGQPVPEVKYILEVNPEHALVKRMADEADEQTFGRWAEVLLGQAMLAERGSMEDPSQFLGAVNQLLAPSH.

An a; substrate-binding region spans residues 1–344 (MSETATTNKE…SNDLPLNVSR (344 aa)). Residues 345 to 561 (EILQDNKITQ…DYEMGTQMAK (217 aa)) are b. A c region spans residues 562–635 (LLAAAGQPVP…AVNQLLAPSH (74 aa)).

It belongs to the heat shock protein 90 family. As to quaternary structure, homodimer.

The protein localises to the cytoplasm. Its function is as follows. Molecular chaperone. Has ATPase activity. The sequence is that of Chaperone protein HtpG from Vibrio cholerae serotype O1 (strain ATCC 39541 / Classical Ogawa 395 / O395).